Consider the following 151-residue polypeptide: MKKIDVKILDPRVGKEFPLPTYATSGSAGLDLRACLDDAVELAPGDTTLVPTGLAIHIADPSLAAMMLPRSGLGHKHGIVLGNLVGLIDSDYQGQLMISVWNRGQDNFTIQPGERIAQMIFVPVVQAEFNLVEDFDATDRGEGGFGHSGRQ.

Residues 70–72 (RSG), N83, 87–89 (LID), and M97 each bind substrate.

It belongs to the dUTPase family. As to quaternary structure, homotrimer. The cofactor is Mg(2+).

The enzyme catalyses dUTP + H2O = dUMP + diphosphate + H(+). Its pathway is pyrimidine metabolism; dUMP biosynthesis; dUMP from dCTP (dUTP route): step 2/2. Its function is as follows. This enzyme is involved in nucleotide metabolism: it produces dUMP, the immediate precursor of thymidine nucleotides and it decreases the intracellular concentration of dUTP so that uracil cannot be incorporated into DNA. The chain is Deoxyuridine 5'-triphosphate nucleotidohydrolase from Escherichia coli O45:K1 (strain S88 / ExPEC).